The chain runs to 527 residues: Transcription initiation factor TFIID subunit 6b (527 aa).

Positions 3 to 99 (TKESIEVIAQ…NLEPTSGSKS (97 aa)) constitute a Histone-fold domain. 2 disordered regions span residues 410–442 (SPPT…THQP) and 462–492 (MRGT…PKTS). 2 stretches are compositionally biased toward polar residues: residues 416-427 (VWKTNGKLTSPR) and 462-473 (MRGTTTVPQQSH).

It belongs to the TAF6 family. As to quaternary structure, component of the TFIID complex. TFIID is composed of TATA binding protein (TBP) and a number of TBP-associated factors (TAFs) whose MWs range from 14-217 kDa. Interacts with TAF5 and TAF9. In terms of tissue distribution, expressed in roots, leaves, inflorescences and siliques.

The protein resides in the nucleus. In terms of biological role, TAFs are components of the transcription factor IID (TFIID) complex that is essential for mediating regulation of RNA polymerase transcription. Not redundant with TAF6. This Arabidopsis thaliana (Mouse-ear cress) protein is Transcription initiation factor TFIID subunit 6b (TAF6B).